The primary structure comprises 132 residues: Fatty acid-binding protein 9 (132 aa).

Ser-13, Ser-14, Ser-44, and Ser-91 each carry phosphoserine.

This sequence belongs to the calycin superfamily. Fatty-acid binding protein (FABP) family.

Its subcellular location is the cytoplasm. This chain is Fatty acid-binding protein 9 (FABP9), found in Homo sapiens (Human).